Consider the following 295-residue polypeptide: Lipase 2 (295 aa).

The signal sequence occupies residues methionine 1–alanine 31. Catalysis depends on serine 48, which acts as the Nucleophile. Disulfide bonds link cysteine 65-cysteine 89, cysteine 138-cysteine 152, and cysteine 205-cysteine 254. Histidine 275 is a catalytic residue.

Belongs to the 'GDSL' lipolytic enzyme family. In terms of assembly, monomer.

The protein resides in the secreted. It catalyses the reaction a triacylglycerol + H2O = a diacylglycerol + a fatty acid + H(+). Strongly inhibited by Ag(+). The cations Ca(2+) and Mg(2+) do not significantly reduce the lipolytic activity of SCO7513, whereas high concentrations of Co(2+) and Cu(2+) partially inhibit it. Is not inhibited by DTT in vitro. Is resistant to PMSF inhibition, except in the presence of Ca(2+). Functionally, catalyzes the hydrolysis of fatty acid esters with a preference for long chain fatty acids (C16-C18). This is Lipase 2 from Streptomyces coelicolor (strain ATCC BAA-471 / A3(2) / M145).